The primary structure comprises 352 residues: Very-long-chain 3-oxoacyl-CoA reductase (352 aa).

Residues 20-40 form a helical membrane-spanning segment; the sequence is TLWFIFIFGLLKLVPFALRFL. NADP(+) is bound by residues Val66, Asp120, Asn147, Tyr228, Lys232, Val261, and Ser263. Tyr228 (proton donor) is an active-site residue. The active-site Lowers pKa of active site Tyr is the Lys232.

It belongs to the short-chain dehydrogenases/reductases (SDR) family.

It localises to the endoplasmic reticulum membrane. It catalyses the reaction a very-long-chain (3R)-3-hydroxyacyl-CoA + NADP(+) = a very-long-chain 3-oxoacyl-CoA + NADPH + H(+). Its pathway is lipid metabolism; fatty acid biosynthesis. In terms of biological role, component of the microsomal membrane bound fatty acid elongation system, which produces the 26-carbon very long-chain fatty acids (VLCFA) from palmitate. Catalyzes the reduction of the 3-ketoacyl-CoA intermediate that is formed in each cycle of fatty acid elongation. VLCFAs serve as precursors for ceramide and sphingolipids. The polypeptide is Very-long-chain 3-oxoacyl-CoA reductase (Candida glabrata (strain ATCC 2001 / BCRC 20586 / JCM 3761 / NBRC 0622 / NRRL Y-65 / CBS 138) (Yeast)).